A 186-amino-acid polypeptide reads, in one-letter code: Dehydrin Rab18 (186 aa).

The tract at residues 1–186 is disordered; the sequence is MASYQNRPGG…IKEKLPGGGR (186 aa). The span at 30–85 shows a compositional bias: gly residues; sequence PMGGGGYGTGGGGGATGGQGYGTGGQGYGSGGQGYGTGGQGYGTGTGTEGFGTGGG. The segment covering 89-98 has biased composition (basic and acidic residues); the sequence is HGQEQLHKES. Residues 105-116 show a composition bias toward low complexity; sequence MLHRSGSGSSSS. Positions 133 to 144 are enriched in basic and acidic residues; sequence KIKEKLPGHHDQ. Gly residues predominate over residues 152-164; the sequence is GGMGSGYDAGGYG. Basic and acidic residues predominate over residues 165 to 186; it reads GEHHEKKGMMDKIKEKLPGGGR.

The protein belongs to the plant dehydrin family.

The sequence is that of Dehydrin Rab18 (RAB18) from Arabidopsis thaliana (Mouse-ear cress).